The sequence spans 136 residues: uncharacterized protein (136 aa).

This is an uncharacterized protein from Methanocaldococcus jannaschii (strain ATCC 43067 / DSM 2661 / JAL-1 / JCM 10045 / NBRC 100440) (Methanococcus jannaschii).